The primary structure comprises 108 residues: SPbeta prophage-derived uncharacterized HTH-type transcriptional regulator YonR (108 aa).

Residues 6-60 (LKKCRTSKGYSQQRMADFLGITRQGYGKYEIGKAEPDLKTLTKLSNILGVSTDFL) enclose the HTH cro/C1-type domain. The segment at residues 17–36 (QQRMADFLGITRQGYGKYEI) is a DNA-binding region (H-T-H motif).

The chain is SPbeta prophage-derived uncharacterized HTH-type transcriptional regulator YonR (yonR) from Bacillus subtilis (strain 168).